A 382-amino-acid polypeptide reads, in one-letter code: Gibberellin 2-beta-dioxygenase 1 (382 aa).

The Fe2OG dioxygenase domain occupies 189-321 (DSDCLLRINH…RLSTIYFASP (133 aa)). A 2-oxoglutarate-binding site is contributed by tyrosine 199. Positions 241, 243, and 302 each coordinate Fe cation. Residues arginine 312 and serine 314 each coordinate 2-oxoglutarate.

This sequence belongs to the iron/ascorbate-dependent oxidoreductase family. GA2OX subfamily. The cofactor is L-ascorbate. It depends on Fe(2+) as a cofactor. As to expression, expressed in roots, shoot apex, and in the basal region of leaf primordia and young leaves.

The catalysed reaction is gibberellin A1 + 2-oxoglutarate + O2 = gibberellin A8 + succinate + CO2. Functionally, catalyzes the 2-beta-hydroxylation of several biologically active gibberellins, leading to the homeostatic regulation of their endogenous level. Catabolism of gibberellins (GAs) plays a central role in plant development. Controls the level of bioactive GAs in the shoot apical meristem, which regulates the vegetative to reproductive phase transition. In vitro, converts GA1, GA4, GA9, GA20, and GA44 to the corresponding 2-beta-hydroxylated products GA8, GA34, GA51, GA29, and GA98, respectively. The chain is Gibberellin 2-beta-dioxygenase 1 from Oryza sativa subsp. japonica (Rice).